The sequence spans 184 residues: Flagellar transcriptional regulator FlhC (184 aa).

Residues cysteine 144, cysteine 147, cysteine 163, and cysteine 166 each contribute to the Zn(2+) site.

It belongs to the FlhC family. As to quaternary structure, heterohexamer composed of two FlhC and four FlhD subunits. Each FlhC binds a FlhD dimer, forming a heterotrimer, and a hexamer assembles by dimerization of two heterotrimers. Requires Zn(2+) as cofactor.

The protein resides in the cytoplasm. In terms of biological role, functions in complex with FlhD as a master transcriptional regulator that regulates transcription of several flagellar and non-flagellar operons by binding to their promoter region. Activates expression of class 2 flagellar genes, including fliA, which is a flagellum-specific sigma factor that turns on the class 3 genes. Also regulates genes whose products function in a variety of physiological pathways. The chain is Flagellar transcriptional regulator FlhC from Verminephrobacter eiseniae (strain EF01-2).